Consider the following 295-residue polypeptide: Shikimate dehydrogenase (NADP(+)) (295 aa).

Shikimate-binding positions include 21-23 (SLS) and Thr68. Lys72 functions as the Proton acceptor in the catalytic mechanism. Residues Asn93 and Asp108 each contribute to the shikimate site. NADP(+) is bound by residues 132–136 (GAGGA), 156–161 (NRTPER), and Leu228. Residue Tyr230 participates in shikimate binding. NADP(+) is bound at residue Gly251.

The protein belongs to the shikimate dehydrogenase family. Homodimer.

The enzyme catalyses shikimate + NADP(+) = 3-dehydroshikimate + NADPH + H(+). The protein operates within metabolic intermediate biosynthesis; chorismate biosynthesis; chorismate from D-erythrose 4-phosphate and phosphoenolpyruvate: step 4/7. Its function is as follows. Involved in the biosynthesis of the chorismate, which leads to the biosynthesis of aromatic amino acids. Catalyzes the reversible NADPH linked reduction of 3-dehydroshikimate (DHSA) to yield shikimate (SA). The chain is Shikimate dehydrogenase (NADP(+)) from Moorella thermoacetica (strain ATCC 39073 / JCM 9320).